Consider the following 256-residue polypeptide: Chlorophyll a-b binding protein CP24 10A, chloroplastic (256 aa).

2 helical membrane passes run tryptophan 106–phenylalanine 126 and alanine 134–valine 154.

This sequence belongs to the ELIP/psbS family.

It localises to the plastid. The protein localises to the chloroplast thylakoid membrane. In Solanum lycopersicum (Tomato), this protein is Chlorophyll a-b binding protein CP24 10A, chloroplastic (CAP10A).